The sequence spans 268 residues: Phosphatidylglycerol--prolipoprotein diacylglyceryl transferase (268 aa).

7 helical membrane passes run 21–41 (WYGIIIVSAIALSIWLGGRFA), 54–74 (FAIILVPAGILGARLYEVFVL), 93–113 (GLAIHGAVLGGAIAAAIYLPM), 122–142 (ADVVGLVLPLAQAIGRWGNFF), 173–193 (VMHPTFLYESVWNLLTFGILL), 203–223 (GVVFSLYLVLYNAGRFLIESI), and 236–256 (VAQLVAAVLAILGLVLLAWFL). Residue arginine 137 coordinates a 1,2-diacyl-sn-glycero-3-phospho-(1'-sn-glycerol).

The protein belongs to the Lgt family.

The protein localises to the cell membrane. It catalyses the reaction L-cysteinyl-[prolipoprotein] + a 1,2-diacyl-sn-glycero-3-phospho-(1'-sn-glycerol) = an S-1,2-diacyl-sn-glyceryl-L-cysteinyl-[prolipoprotein] + sn-glycerol 1-phosphate + H(+). It functions in the pathway protein modification; lipoprotein biosynthesis (diacylglyceryl transfer). Functionally, catalyzes the transfer of the diacylglyceryl group from phosphatidylglycerol to the sulfhydryl group of the N-terminal cysteine of a prolipoprotein, the first step in the formation of mature lipoproteins. This Symbiobacterium thermophilum (strain DSM 24528 / JCM 14929 / IAM 14863 / T) protein is Phosphatidylglycerol--prolipoprotein diacylglyceryl transferase.